The chain runs to 139 residues: MEDKNILVEGFNQLSQQALELSQHAQALALQASHAVLPAAAATEGASEFWWLMTVFVLACFIGFYVVWSVTPALHSPLMGVTNAISSVIVVGALIATGPEAFSASKVLGFFAILLASVNIFGGFIVTQRMLAMFKKKQK.

3 helical membrane passes run 49 to 69 (FWWL…VVWS), 78 to 98 (LMGV…IATG), and 107 to 127 (VLGF…FIVT).

As to quaternary structure, complex of an alpha and a beta chain; in Rhodospirillum, the alpha chain seems to be made of two subunits.

Its subcellular location is the cell inner membrane. The catalysed reaction is NAD(+) + NADPH + H(+)(in) = NADH + NADP(+) + H(+)(out). Functionally, the transhydrogenation between NADH and NADP is coupled to respiration and ATP hydrolysis and functions as a proton pump across the membrane. This is NAD(P) transhydrogenase subunit alpha part 2 (pntAB) from Rhodospirillum rubrum (strain ATCC 11170 / ATH 1.1.1 / DSM 467 / LMG 4362 / NCIMB 8255 / S1).